The chain runs to 200 residues: NADH-quinone oxidoreductase subunit C (200 aa).

It belongs to the complex I 30 kDa subunit family. As to quaternary structure, NDH-1 is composed of 14 different subunits. Subunits NuoB, C, D, E, F, and G constitute the peripheral sector of the complex.

The protein resides in the cell inner membrane. The catalysed reaction is a quinone + NADH + 5 H(+)(in) = a quinol + NAD(+) + 4 H(+)(out). Functionally, NDH-1 shuttles electrons from NADH, via FMN and iron-sulfur (Fe-S) centers, to quinones in the respiratory chain. The immediate electron acceptor for the enzyme in this species is believed to be ubiquinone. Couples the redox reaction to proton translocation (for every two electrons transferred, four hydrogen ions are translocated across the cytoplasmic membrane), and thus conserves the redox energy in a proton gradient. The chain is NADH-quinone oxidoreductase subunit C from Rhizobium rhizogenes (strain K84 / ATCC BAA-868) (Agrobacterium radiobacter).